A 209-amino-acid polypeptide reads, in one-letter code: Uracil phosphoribosyltransferase (209 aa).

5-phospho-alpha-D-ribose 1-diphosphate contacts are provided by residues arginine 78, arginine 103, and 130–138; that span reads DPMLATAGS. Uracil-binding positions include isoleucine 193 and 198 to 200; that span reads GDA. Position 199 (aspartate 199) interacts with 5-phospho-alpha-D-ribose 1-diphosphate.

Belongs to the UPRTase family. The cofactor is Mg(2+).

It catalyses the reaction UMP + diphosphate = 5-phospho-alpha-D-ribose 1-diphosphate + uracil. Its pathway is pyrimidine metabolism; UMP biosynthesis via salvage pathway; UMP from uracil: step 1/1. With respect to regulation, allosterically activated by GTP. Functionally, catalyzes the conversion of uracil and 5-phospho-alpha-D-ribose 1-diphosphate (PRPP) to UMP and diphosphate. The polypeptide is Uracil phosphoribosyltransferase (Methylibium petroleiphilum (strain ATCC BAA-1232 / LMG 22953 / PM1)).